The following is a 259-amino-acid chain: MLIIPAIDLREGNCVRLVEGRLDRETVYSGDPVAVAGMWQSQGARMLHVVDLDGAFSGAPKNLDVIGEILSAVSIPVQVGGGIRSMEAVERLLELGAARVILGTAAILKPQLVAEACARYGEAVLVGIDGRNGRVAIEGWGVTVDKGTVELALEMKRLGIKRAVFTDIRRDGTLRGPNLEAIREFAAATGLKVIASGGVSNAEDLRALKKLEPLGVEAVIMGKALYAGTVKMSEALAIASGEEAEEGACCKKESSPAWT.

Catalysis depends on Asp8, which acts as the Proton acceptor. The active-site Proton donor is Asp129.

The protein belongs to the HisA/HisF family.

It localises to the cytoplasm. It carries out the reaction 1-(5-phospho-beta-D-ribosyl)-5-[(5-phospho-beta-D-ribosylamino)methylideneamino]imidazole-4-carboxamide = 5-[(5-phospho-1-deoxy-D-ribulos-1-ylimino)methylamino]-1-(5-phospho-beta-D-ribosyl)imidazole-4-carboxamide. It functions in the pathway amino-acid biosynthesis; L-histidine biosynthesis; L-histidine from 5-phospho-alpha-D-ribose 1-diphosphate: step 4/9. This Pelotomaculum thermopropionicum (strain DSM 13744 / JCM 10971 / SI) protein is 1-(5-phosphoribosyl)-5-[(5-phosphoribosylamino)methylideneamino] imidazole-4-carboxamide isomerase.